The primary structure comprises 476 residues: PRAME family member 6 (476 aa).

The LRR 1; degenerate repeat unit spans residues 97-124; it reads RWKLQVLDLQDVCENFWMVWSEAMARGC. An LRR 2; degenerate repeat occupies 179 to 203; sequence HLCCKKLKILGMPFRNIRSILKMVN. An LRR 3; degenerate repeat occupies 204–230; sequence LDCIQEVEVNCKWVLPILTQFTPYLGH. One copy of the LRR 4; degenerate repeat lies at 231 to 266; it reads MRNLQKLVLSHMDVSRYVSPEQKKEIVTQFTTQFLK. 5 LRR repeats span residues 267–292, 293–324, 325–345, 349–376, and 377–401; these read LCCL…LSCL, KTSL…SQLK, TLDL…QILL, AATL…ALSR, and CFEL…LLSH.

It belongs to the PRAME family. In terms of assembly, component of a CRL2 E3 ubiquitin-protein ligase complex, also named ECS (Elongin BC-CUL2/5-SOCS-box protein) complex, composed of CUL2, Elongin BC (ELOB and ELOC), RBX1 and substrate-specific adapter PRAMEF6.

Its pathway is protein modification; protein ubiquitination. Its function is as follows. Substrate-recognition component of a Cul2-RING (CRL2) E3 ubiquitin-protein ligase complex, which mediates ubiquitination of target proteins, leading to their degradation. The CRL2(PRAMEF6) complex mediates ubiquitination and degradation of truncated MSRB1/SEPX1 selenoproteins produced by failed UGA/Sec decoding. This is PRAME family member 6 from Homo sapiens (Human).